The chain runs to 190 residues: Ras-related protein RabF1 (190 aa).

A GTP-binding site is contributed by 15 to 22 (GDSGVGKT). The Effector region signature appears at 37–44 (HITIGIEF). Residues 62–66 (DTAGE) and 119–122 (NKND) each bind GTP. Cys187 is subject to Cysteine methyl ester. Cys187 is lipidated: S-geranylgeranyl cysteine. Residues 188–190 (IIN) constitute a propeptide, removed in mature form.

This sequence belongs to the small GTPase superfamily. Rab family.

It localises to the cell membrane. This is Ras-related protein RabF1 (rabF1-1) from Dictyostelium discoideum (Social amoeba).